Reading from the N-terminus, the 817-residue chain is ABC transporter G family member STR (817 aa).

The tract at residues 1–30 (MARLERDGTNKSLESLMDSHKPGGTTTNLN) is disordered. Residues 1 to 542 (MARLERDGTN…RTVLNVIRTP (542 aa)) lie on the Cytoplasmic side of the membrane. One can recognise an ABC transporter domain in the interval 43–294 (LEFTNLSYSI…LSGFGRPVPD (252 aa)). Position 87-94 (87-94 (GPSGAGKS)) interacts with ATP. Disordered regions lie at residues 321–349 (QYQHDGHKPDPAAMTPVPKPPRTPYRRNT), 362–395 (GFTAGTPQPDSSQFGLDDDDNDDDENFDNSLERR), and 439–463 (RPPSWTPARTPGWTPGKTPLSGPRS). The span at 362 to 375 (GFTAGTPQPDSSQF) shows a compositional bias: polar residues. The span at 377–388 (LDDDDNDDDENF) shows a compositional bias: acidic residues. Residues 543–563 (ELFASREIVLTVMALVLSTIF) form a helical membrane-spanning segment. At 564–579 (KNLGDTTFIDINRLLN) the chain is on the extracellular side. A helical transmembrane segment spans residues 580 to 600 (FYIFAVCLVFFSSNDAVPSFI). Over 601 to 621 (MERFIFIRETSHNAYRASSYV) the chain is Cytoplasmic. Residues 622 to 642 (ISSLIVYLPFFAVQGLTFAVI) form a helical membrane-spanning segment. The Extracellular portion of the chain corresponds to 643 to 657 (TKLMLHLKSNLFNFW). Residues 658–678 (MILFASLITTNAYVMLVSALV) form a helical membrane-spanning segment. The Cytoplasmic segment spans residues 679–681 (PSY). A helical membrane pass occupies residues 682 to 702 (ITGYAVVIATTALFFLTCGFF). Residues 703 to 787 (LKRTQIPAYW…TMDITMESLW (85 aa)) are Extracellular-facing. N762 is a glycosylation site (N-linked (GlcNAc...) asparagine). A helical transmembrane segment spans residues 788–808 (YDILILLAWGVLYRFFFYLVL). The Cytoplasmic portion of the chain corresponds to 809–817 (RFYSKNERK).

The protein belongs to the ABC transporter superfamily. ABCG family. Stunted arbuscule (STR) subfamily. Heterodimerizes with STR2; the resulting transporter is located in the peri-arbuscular membrane. Expressed constitutively in the vascular tissue of roots.

The protein localises to the cell membrane. Together with STR2, required for arbuscule development in arbuscular mycorrhizal (AM) symbiosis. The polypeptide is ABC transporter G family member STR (Medicago truncatula (Barrel medic)).